Consider the following 693-residue polypeptide: MA3 DOMAIN-CONTAINING TRANSLATION REGULATORY FACTOR 2 (693 aa).

Residues 25–60 (SLDPLPQANMAEDLTKSRRHSPIKVEGSEETWGVED) form a disordered region. The region spanning 90–211 (EYKKKATVIV…PPAFLKKQMK (122 aa)) is the MI 1 domain. Residues 241 to 248 (EKRWGGTD) carry the Nuclear localization signal 1 motif. MI domains lie at 254-375 (DVKA…SLSA), 389-510 (VFKD…EVLN), and 560-681 (EVKE…EDSQ). A Nuclear localization signal 2 motif is present at residues 430 to 437 (VKYLITLA). Residues 673-693 (ESFASEDSQSKKQNGSSSSSG) form a disordered region. A compositionally biased stretch (low complexity) spans 683-693 (KKQNGSSSSSG).

Belongs to the PDCD4 family. As to quaternary structure, binds to EIF4A1. The association with ribosomes is modulated by cellular energy status and TOR activity. Mostly expressed in reproductive tissues, such as flower buds and flowers, and, to a lower extent, in vegetative tissues, such as leaves, roots and stems.

The protein resides in the nucleus. It localises to the cytoplasm. It is found in the cytosol. Involved in target of rapamycin (TOR)-regulated translation control, especially under energy-deficient conditions. The chain is MA3 DOMAIN-CONTAINING TRANSLATION REGULATORY FACTOR 2 from Arabidopsis thaliana (Mouse-ear cress).